The chain runs to 230 residues: 7-cyano-7-deazaguanine synthase (230 aa).

Position 10-20 (10-20) interacts with ATP; it reads LSGGLDSATTA. Zn(2+) contacts are provided by Cys191, Cys199, Cys202, and Cys205.

The protein belongs to the QueC family. The cofactor is Zn(2+).

It carries out the reaction 7-carboxy-7-deazaguanine + NH4(+) + ATP = 7-cyano-7-deazaguanine + ADP + phosphate + H2O + H(+). It functions in the pathway purine metabolism; 7-cyano-7-deazaguanine biosynthesis. Functionally, catalyzes the ATP-dependent conversion of 7-carboxy-7-deazaguanine (CDG) to 7-cyano-7-deazaguanine (preQ(0)). The polypeptide is 7-cyano-7-deazaguanine synthase (Gloeothece citriformis (strain PCC 7424) (Cyanothece sp. (strain PCC 7424))).